We begin with the raw amino-acid sequence, 141 residues long: Transcription antitermination protein NusB (141 aa).

Belongs to the NusB family.

In terms of biological role, involved in transcription antitermination. Required for transcription of ribosomal RNA (rRNA) genes. Binds specifically to the boxA antiterminator sequence of the ribosomal RNA (rrn) operons. The chain is Transcription antitermination protein NusB from Treponema pallidum (strain Nichols).